Reading from the N-terminus, the 363-residue chain is Trans-2,3-enoyl-CoA reductase-like (363 aa).

At serine 37 the chain carries Phosphoserine. Helical transmembrane passes span 143 to 163 (WTTV…LFYL), 216 to 235 (NLLK…AYYI), 250 to 270 (VAIS…INVV), and 311 to 331 (ISFT…LMSI).

It belongs to the steroid 5-alpha reductase family.

It is found in the membrane. Its subcellular location is the endoplasmic reticulum. The chain is Trans-2,3-enoyl-CoA reductase-like (TECRL) from Bos taurus (Bovine).